The sequence spans 90 residues: MRLSVCLLLLTLALCCYRANAVVCQALGSEITGFLLAGKPVFKFQLAKFKAPLEAVAAKMEVKKCVDTMAYEKRVLITKTLGKIAEKCDR.

The first 21 residues, 1-21, serve as a signal peptide directing secretion; that stretch reads MRLSVCLLLLTLALCCYRANA.

Heterodimer of a lipophilin A and a lipophilin C (mammaglobin B) monomer associated head to head. As to expression, expressed in lachrymal gland, thymus, kidney, testis, ovary and salivary gland.

The protein resides in the secreted. May bind androgens and other steroids, may also bind estramustine, a chemotherapeutic agent used for prostate cancer. May be under transcriptional regulation of steroid hormones. This is Secretoglobin family 1D member 1 (SCGB1D1) from Homo sapiens (Human).